Reading from the N-terminus, the 833-residue chain is Glycerol-3-phosphate acyltransferase (833 aa).

An HXXXXD motif motif is present at residues cysteine 309 to isoleucine 314.

The protein belongs to the GPAT/DAPAT family.

The protein resides in the cell inner membrane. It carries out the reaction sn-glycerol 3-phosphate + an acyl-CoA = a 1-acyl-sn-glycero-3-phosphate + CoA. It participates in phospholipid metabolism; CDP-diacylglycerol biosynthesis; CDP-diacylglycerol from sn-glycerol 3-phosphate: step 1/3. In Pseudomonas syringae pv. syringae (strain B728a), this protein is Glycerol-3-phosphate acyltransferase.